We begin with the raw amino-acid sequence, 617 residues long: 1-deoxy-D-xylulose-5-phosphate synthase (617 aa).

Thiamine diphosphate contacts are provided by residues histidine 77 and 118–120; that span reads GHS. Position 149 (aspartate 149) interacts with Mg(2+). Residues 150–151, asparagine 178, tyrosine 287, and glutamate 368 each bind thiamine diphosphate; that span reads GA. Asparagine 178 provides a ligand contact to Mg(2+).

Belongs to the transketolase family. DXPS subfamily. Homodimer. Requires Mg(2+) as cofactor. The cofactor is thiamine diphosphate.

It carries out the reaction D-glyceraldehyde 3-phosphate + pyruvate + H(+) = 1-deoxy-D-xylulose 5-phosphate + CO2. The protein operates within metabolic intermediate biosynthesis; 1-deoxy-D-xylulose 5-phosphate biosynthesis; 1-deoxy-D-xylulose 5-phosphate from D-glyceraldehyde 3-phosphate and pyruvate: step 1/1. Functionally, catalyzes the acyloin condensation reaction between C atoms 2 and 3 of pyruvate and glyceraldehyde 3-phosphate to yield 1-deoxy-D-xylulose-5-phosphate (DXP). The polypeptide is 1-deoxy-D-xylulose-5-phosphate synthase (Haemophilus ducreyi (strain 35000HP / ATCC 700724)).